A 218-amino-acid polypeptide reads, in one-letter code: Adenylate kinase (218 aa).

Gly-10 to Thr-15 contacts ATP. Positions Ser-30–Val-59 are NMP. AMP contacts are provided by residues Thr-31, Arg-36, Lys-57–Val-59, Gly-85–Arg-88, and Gln-92. The tract at residues Gly-122–Asp-159 is LID. ATP is bound by residues Arg-123 and Thr-132–Tyr-133. Residues Arg-156 and Arg-167 each coordinate AMP. Gly-203 is an ATP binding site.

The protein belongs to the adenylate kinase family. As to quaternary structure, monomer.

It localises to the cytoplasm. It catalyses the reaction AMP + ATP = 2 ADP. It functions in the pathway purine metabolism; AMP biosynthesis via salvage pathway; AMP from ADP: step 1/1. Its function is as follows. Catalyzes the reversible transfer of the terminal phosphate group between ATP and AMP. Plays an important role in cellular energy homeostasis and in adenine nucleotide metabolism. This is Adenylate kinase from Chlorobium phaeobacteroides (strain DSM 266 / SMG 266 / 2430).